The chain runs to 860 residues: Transcription factor E2F8 (860 aa).

Disordered regions lie at residues 1–27 and 38–57; these read MENQ…PSSK and DLGP…GEPW. 2 positions are modified to phosphoserine: Ser71 and Ser102. DNA-binding regions lie at residues 113–182 and 261–347; these read RKEK…TWHG and RKDK…KWTG. Disordered stretches follow at residues 407-433, 532-616, and 745-803; these read RRKI…PPVP, LTPP…PKED, and QMSA…QPVP. Residues Ser412 and Ser416 each carry the phosphoserine modification. Composition is skewed to polar residues over residues 412-429 and 542-554; these read SAPS…SQNS and VCPT…TGSK. Basic and acidic residues predominate over residues 555 to 565; that stretch reads DPTDAPAEKTA.

It belongs to the E2F/DP family. As to quaternary structure, interacts with HIF1A. Homodimer and heterodimer: mainly forms homodimers and, to a lesser extent, heterodimers with E2F8. Dimerization is important for DNA-binding. Highly expressed in liver, skin, thymus and testis. Expressed in trophoblast giant cells throughout placenta development (at protein level).

The protein resides in the nucleus. Atypical E2F transcription factor that participates in various processes such as angiogenesis and polyploidization of specialized cells. Mainly acts as a transcription repressor that binds DNA independently of DP proteins and specifically recognizes the E2 recognition site 5'-TTTC[CG]CGC-3'. Directly represses transcription of classical E2F transcription factors such as E2F1: component of a feedback loop in S phase by repressing the expression of E2F1, thereby preventing p53/TP53-dependent apoptosis. Plays a key role in polyploidization of cells in placenta and liver by regulating the endocycle, probably by repressing genes promoting cytokinesis and antagonizing action of classical E2F proteins (E2F1, E2F2 and/or E2F3). Required for placental development by promoting polyploidization of trophoblast giant cells. Acts as a promoter of sprouting angiogenesis, possibly by acting as a transcription activator: associates with HIF1A, recognizes and binds the VEGFA promoter, which is different from canonical E2 recognition site, and activates expression of the VEGFA gene. This chain is Transcription factor E2F8 (E2f8), found in Mus musculus (Mouse).